The following is a 339-amino-acid chain: D-erythrose-4-phosphate dehydrogenase (339 aa).

11–12 (RI) is an NAD(+) binding site. Substrate contacts are provided by residues 153–155 (SCT), Arg199, 212–213 (TK), and Arg235. The Nucleophile role is filled by Cys154. Asn317 contacts NAD(+).

Belongs to the glyceraldehyde-3-phosphate dehydrogenase family. Epd subfamily. In terms of assembly, homotetramer.

The protein localises to the cytoplasm. The enzyme catalyses D-erythrose 4-phosphate + NAD(+) + H2O = 4-phospho-D-erythronate + NADH + 2 H(+). The protein operates within cofactor biosynthesis; pyridoxine 5'-phosphate biosynthesis; pyridoxine 5'-phosphate from D-erythrose 4-phosphate: step 1/5. Catalyzes the NAD-dependent conversion of D-erythrose 4-phosphate to 4-phosphoerythronate. The chain is D-erythrose-4-phosphate dehydrogenase from Shewanella frigidimarina (strain NCIMB 400).